We begin with the raw amino-acid sequence, 538 residues long: Putative amidase kk1C (538 aa).

Positions 1–32 are disordered; that stretch reads MTEPTWKTVASEKQQQRESKIPSEWQIPKSSH. Residues Lys134 and Ser209 each act as charge relay system in the active site. Ser233 acts as the Acyl-ester intermediate in catalysis.

The protein belongs to the amidase family.

It carries out the reaction a monocarboxylic acid amide + H2O = a monocarboxylate + NH4(+). It participates in secondary metabolite biosynthesis. Functionally, putative amidase; part of the gene cluster that mediates the biosynthesis of KK-1, a novel cyclic depsipeptide with 10 residues which is a promising active compound with high activity against many plant pathogens, especially Botrytis cinerea. The role of kk1C in KK-1 biosynthesis has still to be determined. The nonribosomal peptide synthetase (NRPS) kk1B catalyzes the elongation and cyclization of the decapeptide chain composed of 1 D-lactic acid residue (D-Lac), 1 pipecolic acid residue (Pip), 1 aspartic acid residue (Asp), 1 isoleucine residue (Ile), 1 glycine residue (Gly), 1 tyrosine residue (Tyr) and 4 valine residues (Val). The Asp, Ile and 3 Val residues are N-methylated by the 5 methyltransferase domains from the NRPS (found in modules 3, 5, 6, 7 and 9), whereas the Tyr residue is O-methylated by the cluster encoded O-methyltransferase kk1A. The thioesterase kk1J is likely to be involved in the corrective mechanism of peptide chain synthesis. The D-lactate dehydrogenase kk1H is involved in the synthesis of D-lactic acid from pyruvic acid, which is recognized by the A domain of the first kk1B module. The pyrroline-5-carboxylate reductase kk1I is involved in the synthesis of the L-pipecolic acid residue of KK-1 from delta-1-pyrroline-5-carboxylate (P5C), a metabolic intermediate of lysine. It is still unclear how kk1C and kk1D are involved in the production of KK-1. The sequence is that of Putative amidase kk1C from Curvularia clavata.